Here is a 673-residue protein sequence, read N- to C-terminus: tRNA uridine 5-carboxymethylaminomethyl modification enzyme MnmG (673 aa).

Residue 17 to 22 (GGGHAG) coordinates FAD. 284-298 (GPRYCPSVEDKINRF) is an NAD(+) binding site.

It belongs to the MnmG family. In terms of assembly, homodimer. Heterotetramer of two MnmE and two MnmG subunits. FAD is required as a cofactor.

Its subcellular location is the cytoplasm. In terms of biological role, NAD-binding protein involved in the addition of a carboxymethylaminomethyl (cmnm) group at the wobble position (U34) of certain tRNAs, forming tRNA-cmnm(5)s(2)U34. This is tRNA uridine 5-carboxymethylaminomethyl modification enzyme MnmG from Polaromonas sp. (strain JS666 / ATCC BAA-500).